The sequence spans 542 residues: Chaperonin GroEL 2 (542 aa).

ATP contacts are provided by residues 30-33 (TLGP), lysine 51, 87-91 (DGTTT), glycine 415, and aspartate 496.

The protein belongs to the chaperonin (HSP60) family. Forms a cylinder of 14 subunits composed of two heptameric rings stacked back-to-back. Interacts with the co-chaperonin GroES.

It localises to the cytoplasm. It catalyses the reaction ATP + H2O + a folded polypeptide = ADP + phosphate + an unfolded polypeptide.. In terms of biological role, together with its co-chaperonin GroES, plays an essential role in assisting protein folding. The GroEL-GroES system forms a nano-cage that allows encapsulation of the non-native substrate proteins and provides a physical environment optimized to promote and accelerate protein folding. This Rhizobium etli (strain ATCC 51251 / DSM 11541 / JCM 21823 / NBRC 15573 / CFN 42) protein is Chaperonin GroEL 2.